Consider the following 90-residue polypeptide: Major envelope protein (90 aa).

A helical membrane pass occupies residues 53 to 70 (AVSVVSWAVAAGLIGELI).

It localises to the virion membrane. Functionally, essential for membrane formation. The chain is Major envelope protein (P9) from Pseudomonas savastanoi pv. phaseolicola (Pseudomonas syringae pv. phaseolicola).